The sequence spans 275 residues: 1-deoxy-11-beta-hydroxypentalenate dehydrogenase (275 aa).

12–36 (GAASGIGLALSARFARAGAGVVMAD) contacts NAD(+). S144 contacts substrate. Y157 serves as the catalytic Proton acceptor. K161 contributes to the NAD(+) binding site.

This sequence belongs to the short-chain dehydrogenases/reductases (SDR) family.

The catalysed reaction is 1-deoxy-11beta-hydroxypentalenate + NAD(+) = 1-deoxy-11-oxopentalenate + NADH + H(+). Its pathway is antibiotic biosynthesis; pentalenolactone biosynthesis. In terms of biological role, catalyzes the oxidation of 1-deoxy-11-beta-hydroxypentalenic acid to 1-deoxy-11-oxopentalenic acid in the biosynthesis of pentalenolactone antibiotic. The chain is 1-deoxy-11-beta-hydroxypentalenate dehydrogenase (penF) from Streptomyces exfoliatus (Streptomyces hydrogenans).